A 92-amino-acid chain; its full sequence is Small ribosomal subunit protein uS19 (92 aa).

Belongs to the universal ribosomal protein uS19 family.

Functionally, protein S19 forms a complex with S13 that binds strongly to the 16S ribosomal RNA. The protein is Small ribosomal subunit protein uS19 of Yersinia pestis (strain Pestoides F).